The chain runs to 196 residues: Holliday junction branch migration complex subunit RuvA (196 aa).

A domain I region spans residues 1 to 63 (MYDYIKGTLV…DDAHLLFGFH (63 aa)). The interval 64–142 (TEDEKEVFLK…ELPAETTNTT (79 aa)) is domain II. The tract at residues 143–146 (ANQT) is flexible linker. The interval 147–196 (AGNQQLDEAMEALLALGYKATELKKVKAFFEDTNETAEQYIKSALKMLMK) is domain III.

It belongs to the RuvA family. Homotetramer. Forms an RuvA(8)-RuvB(12)-Holliday junction (HJ) complex. HJ DNA is sandwiched between 2 RuvA tetramers; dsDNA enters through RuvA and exits via RuvB. An RuvB hexamer assembles on each DNA strand where it exits the tetramer. Each RuvB hexamer is contacted by two RuvA subunits (via domain III) on 2 adjacent RuvB subunits; this complex drives branch migration. In the full resolvosome a probable DNA-RuvA(4)-RuvB(12)-RuvC(2) complex forms which resolves the HJ.

It localises to the cytoplasm. The RuvA-RuvB-RuvC complex processes Holliday junction (HJ) DNA during genetic recombination and DNA repair, while the RuvA-RuvB complex plays an important role in the rescue of blocked DNA replication forks via replication fork reversal (RFR). RuvA specifically binds to HJ cruciform DNA, conferring on it an open structure. The RuvB hexamer acts as an ATP-dependent pump, pulling dsDNA into and through the RuvAB complex. HJ branch migration allows RuvC to scan DNA until it finds its consensus sequence, where it cleaves and resolves the cruciform DNA. The polypeptide is Holliday junction branch migration complex subunit RuvA (Streptococcus thermophilus (strain ATCC BAA-491 / LMD-9)).